We begin with the raw amino-acid sequence, 365 residues long: MTSRVDPANPGSELDSAIRDTLTYSNCPVPNALLTASESGFLDAAGIELDVLSGQQGTVHFTYDQPAYTRFGGEIPPLLSEGLRAPGRTRLLGITPLLGRQGFFVRDDSPITAAADLAGRRIGVSASAIRILRGQLGDYLELDPWRQTLVALGSWEARALLHTLEHGELGVDDVELVPISSPGVDVPAEQLEESATVKGADLFPDVARGQAAVLASGDVDALYSWLPWAGELQATGARPVVDLGLDERNAYASVWTVSSGLVRQRPGLVQRLVDAAVDAGLWARDHSDAVTSLHAANLGVSTGAVGQGFGADFQQRLVPRLDHDALALLERTQQFLLTNNLLQEPVALDQWAAPEFLNNSLNRHR.

The active site involves cysteine 27. 2'-hydroxybiphenyl-2-sulfinate contacts are provided by cysteine 27, histidine 60, and arginine 70. The active site involves arginine 70.

Belongs to the DszB desulfinase family. In terms of assembly, monomer.

The protein resides in the cytoplasm. The enzyme catalyses 2'-hydroxybiphenyl-2-sulfinate + H2O = biphenyl-2-ol + sulfite + H(+). It functions in the pathway sulfur metabolism; dibenzothiophene degradation. Its function is as follows. Catalyzes the third and final step of the '4S' desulfurization pathway that removes covalently bound sulfur from dibenzothiophene (DBT) without breaking carbon-carbon bonds. Oxidizes 2-(2'-hydroxyphenyl)benzene sulphinate (HBPS) to 2-hydroxybiphenyl (HBP) plus sulfite. The rate-limiting step of the '4S' desulfurization pathway. This Rhodococcus erythropolis (Arthrobacter picolinophilus) protein is 2'-hydroxybiphenyl-2-sulfinate desulfinase.